The sequence spans 437 residues: MPLITNVIARQILDSRGNPTVEVDVLTESSFGRAAVPSGASTGIHEAVELRDGDREVYLGKGVLKAVENVNTVINDALEGMLVTEQTEIDKLLLSLDGTPNKSKLGANALLGVSLACAKAAAEYSGLPLFRYIGGTLANTLPVPMMNVLNGGAHADNNVDFQEFMIMPIGFSSYSDALRCGAEVFHALKALLKSKGLSTAVGDEGGFAPDLASNEEAIELVIEAVGKAGYKAGSPTNAGGLGDAHVMIALDPASSEFYDTDKKKYIFKKSSGQELDSAEMASYWENWAGKYPIISIEDGMAEDDWEGWKILTDKIGSRVQLVGDDLFVTNSIRLADGIERKVGNSILIKVNQIGTLTETLQAIDLAKRNGYTSVISHRSGETEDSTIAQIAVATNAGQIKTGSLSRSDRMAKYNELLRIEEELGDEACYPGIRAFRV.

Glutamine 162 contributes to the (2R)-2-phosphoglycerate binding site. Glutamate 204 acts as the Proton donor in catalysis. Residues aspartate 251, glutamate 297, and aspartate 324 each coordinate Mg(2+). The (2R)-2-phosphoglycerate site is built by lysine 349, arginine 378, serine 379, and lysine 400. Lysine 349 serves as the catalytic Proton acceptor.

The protein belongs to the enolase family. It depends on Mg(2+) as a cofactor.

Its subcellular location is the cytoplasm. The protein localises to the secreted. It is found in the cell surface. It catalyses the reaction (2R)-2-phosphoglycerate = phosphoenolpyruvate + H2O. It participates in carbohydrate degradation; glycolysis; pyruvate from D-glyceraldehyde 3-phosphate: step 4/5. Functionally, catalyzes the reversible conversion of 2-phosphoglycerate (2-PG) into phosphoenolpyruvate (PEP). It is essential for the degradation of carbohydrates via glycolysis. This Prosthecochloris aestuarii (strain DSM 271 / SK 413) protein is Enolase.